The chain runs to 1026 residues: Maternal effect protein staufen (1026 aa).

Over residues 16–29 the composition is skewed to basic residues; that stretch reads AAHHHSHSHAHMHL. 3 disordered regions span residues 16 to 159, 190 to 210, and 234 to 311; these read AAHH…QLPP, NHYGSNANSNSGSNNSNSNYA, and TPVP…KDKT. Low complexity predominate over residues 70–111; the sequence is AQQQQQQQTSSNQAGAVAAAGAAYHHGNINSNSGSNISSNSN. The span at 112–126 shows a compositional bias: polar residues; it reads QMQKIRQQHQHLSSS. 2 stretches are compositionally biased toward low complexity: residues 192-210 and 234-256; these read YGSNANSNSGSNNSNSNYA and TPVPEPPVTTNNATTNSTSNSTV. A compositionally biased stretch (basic and acidic residues) spans 267–284; that stretch reads TSQKPETRQEPASADDHV. Residues 285-303 show a composition bias toward polar residues; it reads STGNIDATGALSNEDTSSS. 2 consecutive DRBM domains span residues 311-378 and 490-557; these read TPMC…ETMY and PKFP…VLKT. Serine 563 and serine 570 each carry phosphoserine. Positions 578-645 constitute a DRBM 3 domain; that stretch reads SPISQVHEIG…AEKMLVELQK (68 aa). 5 residues coordinate RNA: histidine 606, lysine 608, lysine 628, lysine 629, and lysine 632. Residues 647–707 form a disordered region; that stretch reads PPLTPTKQTP…PPKDKLIDMD (61 aa). A phosphothreonine mark is found at threonine 650 and threonine 655. Serine 676 bears the Phosphoserine mark. Residues 678 to 688 show a composition bias toward polar residues; the sequence is VSGTDGPTQTG. Residues 711–781 enclose the DRBM 4 domain; that stretch reads NPITKLIQLQ…AQALFELLEA (71 aa). The disordered stretch occupies residues 855 to 948; it reads ESKEEEANKE…SNSTSNTQSA (94 aa). Residues 864–890 show a composition bias toward low complexity; that stretch reads EVAVAAEENSNNSANSGDSSNSSSGDS. A compositionally biased stretch (polar residues) spans 891–901; that stretch reads QATEAASESAL. Low complexity-rich tracts occupy residues 902-920 and 934-947; these read NTSTGSNTSGVSSNSSNVG and NTESSSNSTSNTQS. One can recognise a DRBM 5 domain in the interval 951-1018; sequence HMKEQLLYLS…ASNALKILSK (68 aa).

In terms of assembly, component of neuronal ribonucleoprotein complexes (RNPs) that contains at least various translational repressor and mRNA turnover proteins such as me31B, tral, Upf1, AGO2 and sometimes Fmr1. Polar granules at the posterior pole of the oocyte, and by the time the egg is laid, at the anterior pole.

It is found in the cytoplasm. The protein localises to the cytoplasmic ribonucleoprotein granule. In terms of biological role, RNA-binding protein which forms ribonucleoprotein complexes (RNPs) that play critical roles in the localization, translational repression and turnover of RNAs during embryogenesis, neurotransmission and neurogenesis. In the oocyte, essential for the localization of both the osk/oskar mRNA to the posterior pole and bcd/bicoid RNA to the anterior pole, and is therefore required for the correct anterior-posterior patterning of the developing embryo. Association with osk or bcd at their respective poles, appears to promote the formation and stabilization of the ribonucleoprotein complexes. Integral component of diverse neuritic ribonucleoprotein complexes (RNPs) that mediate the transport, translation and turnover of neuronal RNAs during neuorgenesis and the translation repression of synaptic transcripts in preparation for their dendritic targeting. The protein is Maternal effect protein staufen (stau) of Drosophila melanogaster (Fruit fly).